The chain runs to 194 residues: FMN-dependent NADH:quinone oxidoreductase 1 (194 aa).

Residues S9 and 85–88 contribute to the FMN site; that span reads MYNF.

This sequence belongs to the azoreductase type 1 family. Homodimer. The cofactor is FMN.

The catalysed reaction is 2 a quinone + NADH + H(+) = 2 a 1,4-benzosemiquinone + NAD(+). It carries out the reaction N,N-dimethyl-1,4-phenylenediamine + anthranilate + 2 NAD(+) = 2-(4-dimethylaminophenyl)diazenylbenzoate + 2 NADH + 2 H(+). Quinone reductase that provides resistance to thiol-specific stress caused by electrophilic quinones. In terms of biological role, also exhibits azoreductase activity. Catalyzes the reductive cleavage of the azo bond in aromatic azo compounds to the corresponding amines. The protein is FMN-dependent NADH:quinone oxidoreductase 1 of Xanthomonas euvesicatoria pv. vesicatoria (strain 85-10) (Xanthomonas campestris pv. vesicatoria).